Reading from the N-terminus, the 227-residue chain is MGQLGALLHLVDPTLPIGGFNHSNGLETFVQQGKVNSRASLEEYVQTQLMQNWIYNDGAYLSLAFDAMANHDLDRLLALDQELAASKIARESREGSYKLGVRLLKIFIRYENHPLLSEFQQAVSEKRCQGYFPIVFAMVAQAMNLDKAETLYAFYYNAAVGVVTNGVKLVPLSQMDGQDILFALRTPLAQAVENSLNPDLDWLGAATLASDIRSMQHEQLYTRLYMS.

The protein belongs to the UreF family. UreD, UreF and UreG form a complex that acts as a GTP-hydrolysis-dependent molecular chaperone, activating the urease apoprotein by helping to assemble the nickel containing metallocenter of UreC. The UreE protein probably delivers the nickel.

Its subcellular location is the cytoplasm. Functionally, required for maturation of urease via the functional incorporation of the urease nickel metallocenter. The sequence is that of Urease accessory protein UreF from Actinobacillus pleuropneumoniae (Haemophilus pleuropneumoniae).